Reading from the N-terminus, the 813-residue chain is Protein mac-1 (813 aa).

2 coiled-coil regions span residues 58–89 (VREA…VQEI) and 122–152 (SDDS…TVLN). 2 disordered regions span residues 97-131 (TRKR…ERAA) and 152-193 (NLYT…GAVS). Over residues 158–172 (SAPSTPVSTPKNQAT) the composition is skewed to polar residues. Residues 175-191 (PPGASAAPPALPRGLGA) are compositionally biased toward low complexity. Residues 246-253 (GPPGCGKT) and 575-582 (GPPGCGKT) contribute to the ATP site.

This sequence belongs to the AAA ATPase family. As to quaternary structure, found in a complex composed of ced-3, ced-4 and mac-1 or of ced-9, ced-4 and mac-1. Within the complex, interacts with ced-4.

Functionally, probably together with ced-9, plays a modest role in preventing ced-4 and caspase ced-3-mediated apoptosis. This chain is Protein mac-1, found in Caenorhabditis elegans.